The following is a 595-amino-acid chain: Alpha-1,3-galactosidase B (595 aa).

The signal sequence occupies residues 1–22 (MKTILLFALSLLLSLSVSDVCA). 3 PbH1 repeats span residues 432-454 (TPEVLFAGNTIRNNRARGTLFST), 455-477 (PKKTVVEDNLFDHTSGTAILLCG), and 488-541 (CRDV…VIED).

It belongs to the glycosyl hydrolase 110 family. B subfamily.

It catalyses the reaction Hydrolysis of terminal, non-reducing branched (1-&gt;3)-alpha-D-galactosidic residues, producing free D-galactose.. The enzyme catalyses Hydrolysis of terminal, non-reducing linear (1-&gt;3)-alpha-D-galactosidic residues, producing free D-galactose.. The catalysed reaction is Hydrolysis of terminal, non-reducing alpha-D-galactose residues in alpha-D-galactosides, including galactose oligosaccharides, galactomannans and galactolipids.. Functionally, alpha-galactosidase. Removes both branched alpha-1,3-linked galactose residues of blood group B antigens and linear alpha-1,3-linked galactose structures. This is Alpha-1,3-galactosidase B (glaB) from Bacteroides fragilis (strain ATCC 25285 / DSM 2151 / CCUG 4856 / JCM 11019 / LMG 10263 / NCTC 9343 / Onslow / VPI 2553 / EN-2).